The primary structure comprises 197 residues: Xanthine phosphoribosyltransferase (197 aa).

The xanthine site is built by Leu-20 and Asn-27. 128–132 lines the 5-phospho-alpha-D-ribose 1-diphosphate pocket; the sequence is ANGQA. Xanthine is bound at residue Lys-156.

It belongs to the purine/pyrimidine phosphoribosyltransferase family. Xpt subfamily. As to quaternary structure, homodimer.

The protein localises to the cytoplasm. It carries out the reaction XMP + diphosphate = xanthine + 5-phospho-alpha-D-ribose 1-diphosphate. Its pathway is purine metabolism; XMP biosynthesis via salvage pathway; XMP from xanthine: step 1/1. Converts the preformed base xanthine, a product of nucleic acid breakdown, to xanthosine 5'-monophosphate (XMP), so it can be reused for RNA or DNA synthesis. The polypeptide is Xanthine phosphoribosyltransferase (Bacillus cereus (strain ATCC 14579 / DSM 31 / CCUG 7414 / JCM 2152 / NBRC 15305 / NCIMB 9373 / NCTC 2599 / NRRL B-3711)).